The following is a 584-amino-acid chain: NADPH-dependent diflavin oxidoreductase 1 (584 aa).

One can recognise a Flavodoxin-like domain in the interval I6 to Y150. FMN-binding positions include S12–A17, S59–G62, C97–N106, and E132. One can recognise an FAD-binding FR-type domain in the interval R199–Q436. Residues R343, R373 to S376, and G407 to S410 contribute to the FAD site. NADP(+) contacts are provided by residues T448, S503–R504, and K509–Q513. W584 is an FAD binding site.

It belongs to the NADPH-dependent diflavin oxidoreductase NDOR1 family. In the N-terminal section; belongs to the flavodoxin family. This sequence in the C-terminal section; belongs to the flavoprotein pyridine nucleotide cytochrome reductase family. As to quaternary structure, interacts with dre2; as part of the cytosolic iron-sulfur (Fe-S) protein assembly (CIA) machinery. FAD is required as a cofactor. The cofactor is FMN.

The protein resides in the cytoplasm. Its subcellular location is the mitochondrion. It carries out the reaction 2 oxidized [2Fe-2S]-[protein] + NADPH = 2 reduced [2Fe-2S]-[protein] + NADP(+) + H(+). In terms of biological role, NADPH-dependent reductase which is a central component of the cytosolic iron-sulfur (Fe-S) protein assembly (CIA) machinery. Transfers electrons from NADPH via its FAD and FMN prosthetic groups to the [2Fe-2S] cluster of dre2, another key component of the CIA machinery. In turn, this reduced cluster provides electrons for assembly of cytosolic iron-sulfur cluster proteins. Positively controls H(2)O(2)-induced cell death. This Schizosaccharomyces pombe (strain 972 / ATCC 24843) (Fission yeast) protein is NADPH-dependent diflavin oxidoreductase 1.